Reading from the N-terminus, the 289-residue chain is Bis(5'-nucleosyl)-tetraphosphatase, symmetrical (289 aa).

Belongs to the Ap4A hydrolase family.

The enzyme catalyses P(1),P(4)-bis(5'-adenosyl) tetraphosphate + H2O = 2 ADP + 2 H(+). Its function is as follows. Hydrolyzes diadenosine 5',5'''-P1,P4-tetraphosphate to yield ADP. The sequence is that of Bis(5'-nucleosyl)-tetraphosphatase, symmetrical from Yersinia pseudotuberculosis serotype O:1b (strain IP 31758).